A 375-amino-acid chain; its full sequence is Chaperone protein DnaJ (375 aa).

The J domain occupies aspartate 4 to glycine 68. The segment at glycine 134–threonine 216 adopts a CR-type zinc-finger fold. The Zn(2+) site is built by cysteine 147, cysteine 150, cysteine 164, cysteine 167, cysteine 190, cysteine 193, cysteine 204, and cysteine 207. CXXCXGXG motif repeat units follow at residues cysteine 147–glycine 154, cysteine 164–glycine 171, cysteine 190–glycine 197, and cysteine 204–glycine 211.

It belongs to the DnaJ family. Homodimer. Requires Zn(2+) as cofactor.

The protein resides in the cytoplasm. Its function is as follows. Participates actively in the response to hyperosmotic and heat shock by preventing the aggregation of stress-denatured proteins and by disaggregating proteins, also in an autonomous, DnaK-independent fashion. Unfolded proteins bind initially to DnaJ; upon interaction with the DnaJ-bound protein, DnaK hydrolyzes its bound ATP, resulting in the formation of a stable complex. GrpE releases ADP from DnaK; ATP binding to DnaK triggers the release of the substrate protein, thus completing the reaction cycle. Several rounds of ATP-dependent interactions between DnaJ, DnaK and GrpE are required for fully efficient folding. Also involved, together with DnaK and GrpE, in the DNA replication of plasmids through activation of initiation proteins. The chain is Chaperone protein DnaJ from Gloeothece citriformis (strain PCC 7424) (Cyanothece sp. (strain PCC 7424)).